Here is a 1024-residue protein sequence, read N- to C-terminus: Gamma-tubulin complex component 5 (1024 aa).

Disordered regions lie at residues 153 to 203 (IGLG…GGPQ), 523 to 545 (NEDK…SSRQ), and 853 to 873 (SQAK…GPPK). Residues 189-198 (TPLEEQDHNR) are compositionally biased toward basic and acidic residues. The span at 529–543 (DSASASSGSDQGPSS) shows a compositional bias: low complexity. Positions 853 to 864 (SQAKEDIPRDQD) are enriched in basic and acidic residues.

It belongs to the TUBGCP family. In terms of assembly, component of the gamma-tubulin ring complex (gTuRC) consisting of TUBGCP2, TUBGCP3, TUBGCP4, TUBGCP5 and TUBGCP6 and gamma-tubulin TUBG1 or TUBG2. TUBGCP2, TUBGCP3, TUBGCP4, TUBGCP5 and TUBGCP6 assemble in a 5:5:2:1:1 stoichiometry; each is associated with a gamma-tubulin, thereby arranging 14 gamma-tubulins in a helical manner. Gamma-tubulin at the first position is blocked by TUBGCP3 at the last position, allowing 13 protafilaments to grow into a microtubule. The gTuRC (via TUBGCP3 and TUBGCP6) interacts with ACTB and MZT1; the interactions form a luminal bridge that stabilizes the initial structure during complex assembly. The gTuRC (via TUBGCP2) interacts with MZT2A/MZT2B and CDK5RAP2 (via CM1 motif); the interactions play a role in gTuRC activation.

It is found in the cytoplasm. The protein localises to the cytoskeleton. The protein resides in the microtubule organizing center. It localises to the centrosome. Functionally, component of the gamma-tubulin ring complex (gTuRC) which mediates microtubule nucleation. The gTuRC regulates the minus-end nucleation of alpha-beta tubulin heterodimers that grow into microtubule protafilaments, a critical step in centrosome duplication and spindle formation. This chain is Gamma-tubulin complex component 5 (Tubgcp5), found in Mus musculus (Mouse).